A 303-amino-acid chain; its full sequence is Sulfotransferase 6B1 (303 aa).

Residue Lys65–Trp70 coordinates 3'-phosphoadenylyl sulfate. The active-site Proton acceptor is His118. 3'-phosphoadenylyl sulfate is bound by residues Arg140, Ser148, Tyr203, Ser237–Met242, and Arg259–Gly261.

The protein belongs to the sulfotransferase 1 family. In terms of tissue distribution, expressed in brain, heart, kidney, thymus, lung, liver and testis.

Its subcellular location is the cytoplasm. It localises to the cytosol. It catalyses the reaction thyroxine + 3'-phosphoadenylyl sulfate = thyroxine sulfate + adenosine 3',5'-bisphosphate + H(+). Sulfotransferase that utilizes 3'-phospho-5'-adenylyl sulfate (PAPS) as sulfonate donor to catalyze the sulfate conjugation of thyroxine. Involved in the metabolism of thyroxine. The chain is Sulfotransferase 6B1 (Sult6b1) from Mus musculus (Mouse).